The chain runs to 360 residues: Protein Wnt-5b (360 aa).

The first 16 residues, 1–16 (MTPILRLLLLSSLLSC), serve as a signal peptide directing secretion. Cysteine 84 and cysteine 95 are disulfide-bonded. Asparagine 94 and asparagine 100 each carry an N-linked (GlcNAc...) asparagine glycan. 10 disulfide bridges follow: cysteine 134-cysteine 142, cysteine 144-cysteine 162, cysteine 218-cysteine 232, cysteine 220-cysteine 227, cysteine 289-cysteine 320, cysteine 305-cysteine 315, cysteine 319-cysteine 359, cysteine 335-cysteine 350, cysteine 337-cysteine 347, and cysteine 342-cysteine 343. Serine 224 carries O-palmitoleoyl serine; by PORCN lipidation. N-linked (GlcNAc...) asparagine glycans are attached at residues asparagine 292 and asparagine 306.

This sequence belongs to the Wnt family. Post-translationally, palmitoleoylation is required for efficient binding to frizzled receptors. Depalmitoleoylation leads to Wnt signaling pathway inhibition.

It localises to the secreted. The protein localises to the extracellular space. Its subcellular location is the extracellular matrix. In terms of biological role, ligand for members of the frizzled family of seven transmembrane receptors. Probable developmental protein. May be a signaling molecule which affects the development of discrete regions of tissues. Is likely to signal over only few cell diameters. This is Protein Wnt-5b (wnt5b) from Xenopus laevis (African clawed frog).